Reading from the N-terminus, the 245-residue chain is tRNA pseudouridine synthase A (245 aa).

The active-site Nucleophile is the D52. Y111 contributes to the substrate binding site.

It belongs to the tRNA pseudouridine synthase TruA family. Homodimer.

It carries out the reaction uridine(38/39/40) in tRNA = pseudouridine(38/39/40) in tRNA. Formation of pseudouridine at positions 38, 39 and 40 in the anticodon stem and loop of transfer RNAs. In Thermotoga petrophila (strain ATCC BAA-488 / DSM 13995 / JCM 10881 / RKU-1), this protein is tRNA pseudouridine synthase A.